Here is a 100-residue protein sequence, read N- to C-terminus: Small ribosomal subunit protein uS14c (100 aa).

A disordered region spans residues 1–54 (MARKSLIQRERKRQKLEQKFHSIRRSSKKEISKVSSLSGKWEIHGKLQSPPRNS).

This sequence belongs to the universal ribosomal protein uS14 family. In terms of assembly, part of the 30S ribosomal subunit.

It localises to the plastid. It is found in the chloroplast. Its function is as follows. Binds 16S rRNA, required for the assembly of 30S particles. In Piper cenocladum (Ant piper), this protein is Small ribosomal subunit protein uS14c.